The chain runs to 929 residues: Band 3 anion transport protein (929 aa).

The residue at position 1 (M1) is an N-acetylmethionine. Residues 1–422 (MGDMRDHEEV…LSDITDALSP (422 aa)) lie on the Cytoplasmic side of the membrane. The residue at position 18 (S18) is a Phosphoserine. Y31 and Y56 each carry phosphotyrosine. The disordered stretch occupies residues 46-67 (ALPTEQTATDYVPSSTSTPHPS). The span at 58–67 (PSSTSTPHPS) shows a compositional bias: low complexity. The interval 69 to 303 (GQVYVELQEL…LGRAAATLMT (235 aa)) is globular. Residues 190–199 (AVLTRSGGAS) form an interaction with ANK1 region. Phosphoserine occurs at positions 199, 222, and 363. The interval 317 to 370 (REELLRSLESFLDCSLVLPPTDAPSEKALLNLVPVQKELLRRRYLPSPAKPDPN) is dimerization arm. Residues 366–389 (KPDPNLYNTLDLNGGKGGPGDEDD) form a disordered region. Y372 carries the phosphotyrosine modification. A Phosphothreonine modification is found at T374. Residues 423–446 (QVLAAVIFIYFAALSPAVTFGGLL) form a helical membrane-spanning segment. Residues 447–454 (GEKTRNLM) are Extracellular-facing. Residues 455–475 (GVSELLISTAVQGILFALLGA) form a helical membrane-spanning segment. The Cytoplasmic segment spans residues 476–478 (QPL). A discontinuously helical transmembrane segment spans residues 479–495 (LVLGFSGPLLVFEEAFF). Residues 496 to 504 (SFCESNNLE) are Extracellular-facing. Residues 505-525 (YIVGRAWIGFWLILLVMLVVA) form a helical membrane-spanning segment. Topologically, residues 526–537 (FEGSFLVQYISR) are cytoplasmic. Residues 538–560 (YTQEIFSFLISLIFIYETFSKLI) form a helical membrane-spanning segment. Topologically, residues 561-588 (KIFQDYPLQQTYAPVVMKPKPQGPVPNT) are extracellular. Residues 589-609 (ALFSLVLMAGTFLLAMTLRKF) form a helical membrane-spanning segment. The Cytoplasmic portion of the chain corresponds to 610–620 (KNSTYFPGKLR). Residues 621-641 (RVIGDFGVPISILIMVLVDSF) form a helical membrane-spanning segment. Residues 642-681 (IKGTYTQKLSVPDGLKVSNSSARGWVIHPLGLYRLFPTWM) lie on the Extracellular side of the membrane. N-linked (GlcNAc...) asparagine glycosylation occurs at N660. A helical transmembrane segment spans residues 682 to 702 (MFASVLPALLVFILIFLESQI). The Cytoplasmic segment spans residues 703–718 (TTLIVSKPERKMIKGS). The chain crosses the membrane as a helical span at residues 719 to 737 (GFHLDLLLVVGMGGVAALF). The chain crosses the membrane as a discontinuously helical span at residues 738 to 755 (GMPWLSATTVRSVTHANA). Residues 756–778 (LTVMGKASGPGAAAQIQEVKEQR) are Cytoplasmic-facing. 2 consecutive transmembrane segments (helical) span residues 779-799 (ISGL…PILS) and 800-818 (RIPL…VTSL). Topologically, residues 819 to 856 (SGIQLFDRILLLFKPPKYHPDVPFVKRVKTWRMHLFTG) are cytoplasmic. Residues 857–887 (IQIICLAVLWVVKSTPASLALPFVLILTVPL) constitute an intramembrane region (discontinuously helical). A lipid anchor (S-palmitoyl cysteine) is attached at C861. Residues 888-929 (RRLILPLIFRELELQCLDGDDAKVTFDEENGLDEYDEVPMPV) are Cytoplasmic-facing. At Y922 the chain carries Phosphotyrosine.

It belongs to the anion exchanger (TC 2.A.31) family. As to quaternary structure, a dimer in solution, but in its membrane environment, it exists primarily as a mixture of dimers and tetramers and spans the membrane asymmetrically. Component of the ankyrin-1 complex in the erythrocyte, composed of ANK1, RHCE, RHAG, SLC4A1, EPB42, GYPA, GYPB and AQP1. Interacts with STOM; this interaction positively regulates SLC4A1 activity. Interacts with GYPA; a GYPA monomer is bound at each end of the SLC4A1 dimer forming a heterotetramer. Three SLC4A1 dimers (Band 3-I, Band 3-II and Band 3-III) participates in the ankyrin-1 complex. Interacts (via the cytoplasmic domain) with EPB42; this interaction is mediated by the SLC4A1 Band 3-I dimer. Interacts (via the cytoplasmic domain) directly with ANK1; this interaction is mediated by the SLC4A1 Band 3-II and Band 3-III dimers. In terms of assembly, interacts with TMEM139. As to expression, detected in erythrocytes (at protein level).

Its subcellular location is the cell membrane. It localises to the basolateral cell membrane. It catalyses the reaction hydrogencarbonate(in) + chloride(out) = hydrogencarbonate(out) + chloride(in). In terms of biological role, functions both as a transporter that mediates electroneutral anion exchange across the cell membrane and as a structural protein. Component of the ankyrin-1 complex of the erythrocyte membrane; required for normal flexibility and stability of the erythrocyte membrane and for normal erythrocyte shape via the interactions of its cytoplasmic domain with cytoskeletal proteins, glycolytic enzymes, and hemoglobin. Functions as a transporter that mediates the 1:1 exchange of inorganic anions across the erythrocyte membrane. Mediates chloride-bicarbonate exchange in the kidney, and is required for normal acidification of the urine. The protein is Band 3 anion transport protein of Mus musculus (Mouse).